The chain runs to 82 residues: Small ribosomal subunit protein bS16 (82 aa).

Belongs to the bacterial ribosomal protein bS16 family.

The chain is Small ribosomal subunit protein bS16 from Caldanaerobacter subterraneus subsp. tengcongensis (strain DSM 15242 / JCM 11007 / NBRC 100824 / MB4) (Thermoanaerobacter tengcongensis).